An 82-amino-acid chain; its full sequence is Small ribosomal subunit protein bS18 (82 aa).

A disordered region spans residues 1 to 20 (MVDINQIPTRRPFHRRRKTC).

The protein belongs to the bacterial ribosomal protein bS18 family. As to quaternary structure, part of the 30S ribosomal subunit. Forms a tight heterodimer with protein bS6.

Functionally, binds as a heterodimer with protein bS6 to the central domain of the 16S rRNA, where it helps stabilize the platform of the 30S subunit. The sequence is that of Small ribosomal subunit protein bS18 from Brucella abortus (strain 2308).